A 346-amino-acid polypeptide reads, in one-letter code: G-protein coupled receptor 42 (346 aa).

The Extracellular portion of the chain corresponds to 1 to 19 (MDTGPDQSYFSGNHWFVFS). Residues 20–40 (VYLLTFLVGLPLNLLALVVFV) traverse the membrane as a helical segment. Over 41–47 (GKLRCRP) the chain is Cytoplasmic. Residues 48 to 68 (VAVDVLLLNLTASDLLLLLFL) form a helical membrane-spanning segment. Over 69–90 (PFRMVEAANGMHWPLPFILCPL) the chain is Extracellular. Residues 91 to 111 (SGFIFFTTIYLTALFLAAVSI) traverse the membrane as a helical segment. The Cytoplasmic segment spans residues 112–132 (ERFLSVAHPLWYKTRPRLGQA). A helical transmembrane segment spans residues 133-153 (GLVSVACWLLASAHCSVVYVI). At 154–178 (EFSGDISHSQGTNGTCYLEFRKDQL) the chain is on the extracellular side. N-linked (GlcNAc...) asparagine glycosylation occurs at Asn166. Residues 179 to 199 (AILLPVRLEMAVVLFVVPLII) form a helical membrane-spanning segment. The Cytoplasmic segment spans residues 200 to 222 (TSYCYSRLVWILGRGGSHRRQRR). Residues 223-243 (VAGLVAATLLNFLVCFGPYNV) form a helical membrane-spanning segment. Topologically, residues 244–258 (SHVVGYICGESPVWR) are extracellular. The chain crosses the membrane as a helical span at residues 259–279 (IYVTLLSTLNSCVDPFVYYFS). Residues 280 to 346 (SSGFQADFHE…TGGQVACAEN (67 aa)) are Cytoplasmic-facing. The span at 307–330 (MELKEQKGGEEQRADRPAERKTSE) shows a compositional bias: basic and acidic residues. Positions 307 to 346 (MELKEQKGGEEQRADRPAERKTSEHSQGCGTGGQVACAEN) are disordered.

Belongs to the G-protein coupled receptor 1 family.

It localises to the cell membrane. In terms of biological role, g protein-coupled receptor that is activated by short chain fatty acids (SCFAs), such as propionate. Hence may play a role in the regulation of whole-body energy homeostasis and/or in intestinal immunity. The sequence is that of G-protein coupled receptor 42 (GPR42) from Homo sapiens (Human).